A 212-amino-acid polypeptide reads, in one-letter code: Probable 2-dehydro-3-deoxy-6-phosphogalactonate aldolase (212 aa).

Residue arginine 18 coordinates 2-dehydro-3-deoxy-6-phospho-D-galactonate. The active-site Proton donor/acceptor is the glutamate 41. Residues threonine 70, lysine 130, glycine 160, glycine 180, and serine 181 each coordinate 2-dehydro-3-deoxy-6-phospho-D-galactonate. Lysine 130 serves as the catalytic Schiff-base intermediate with substrate.

It belongs to the KHG/KDPG aldolase family. Homotrimer.

It catalyses the reaction 2-dehydro-3-deoxy-6-phospho-D-galactonate = D-glyceraldehyde 3-phosphate + pyruvate. It participates in carbohydrate acid metabolism; D-galactonate degradation; D-glyceraldehyde 3-phosphate and pyruvate from D-galactonate: step 3/3. Functionally, involved in the degradation of galactose via the DeLey-Doudoroff pathway. Catalyzes the reversible, stereospecific retro-aldol cleavage of 2-keto-3-deoxy-6-phosphogalactonate (KDPGal) to pyruvate and D-glyceraldehyde-3-phosphate. This chain is Probable 2-dehydro-3-deoxy-6-phosphogalactonate aldolase (dgoA), found in Rhizobium meliloti (strain 1021) (Ensifer meliloti).